Consider the following 530-residue polypeptide: ATP synthase subunit alpha (530 aa).

169–176 (GDRQTGKT) provides a ligand contact to ATP.

It belongs to the ATPase alpha/beta chains family. F-type ATPases have 2 components, CF(1) - the catalytic core - and CF(0) - the membrane proton channel. CF(1) has five subunits: alpha(3), beta(3), gamma(1), delta(1), epsilon(1). CF(0) has three main subunits: a(1), b(2) and c(9-12). The alpha and beta chains form an alternating ring which encloses part of the gamma chain. CF(1) is attached to CF(0) by a central stalk formed by the gamma and epsilon chains, while a peripheral stalk is formed by the delta and b chains.

It is found in the cell membrane. The enzyme catalyses ATP + H2O + 4 H(+)(in) = ADP + phosphate + 5 H(+)(out). Its function is as follows. Produces ATP from ADP in the presence of a proton gradient across the membrane. The alpha chain is a regulatory subunit. This is ATP synthase subunit alpha from Mycoplasmopsis synoviae (strain 53) (Mycoplasma synoviae).